The following is a 157-amino-acid chain: Probable succinate transporter subunit YjjB (157 aa).

4 helical membrane passes run 2 to 22 (GIISFIFALAEDMLLAAIPAV), 55 to 75 (AGFNIEWATFLAALLVGSIGI), 87 to 107 (IFTVAAVIPMFPGISAYTAMI), and 129 to 149 (FLKASSIVGALSIGLSIPGLW).

The protein belongs to the ThrE exporter (TC 2.A.79) family. In terms of assembly, the transporter is composed of YjjB and YjjP.

The protein resides in the cell inner membrane. Functionally, involved in succinate export with YjjP. Both proteins are required for export. This Klebsiella pneumoniae subsp. pneumoniae (strain ATCC 700721 / MGH 78578) protein is Probable succinate transporter subunit YjjB.